The primary structure comprises 62 residues: Photosystem II reaction center protein Z (62 aa).

2 helical membrane passes run 8-28 and 41-61; these read SVFA…VALA and FSGV…NSFI.

It belongs to the PsbZ family. As to quaternary structure, PSII is composed of 1 copy each of membrane proteins PsbA, PsbB, PsbC, PsbD, PsbE, PsbF, PsbH, PsbI, PsbJ, PsbK, PsbL, PsbM, PsbT, PsbY, PsbZ, Psb30/Ycf12, at least 3 peripheral proteins of the oxygen-evolving complex and a large number of cofactors. It forms dimeric complexes.

It is found in the plastid. The protein resides in the chloroplast thylakoid membrane. In terms of biological role, may control the interaction of photosystem II (PSII) cores with the light-harvesting antenna, regulates electron flow through the 2 photosystem reaction centers. PSII is a light-driven water plastoquinone oxidoreductase, using light energy to abstract electrons from H(2)O, generating a proton gradient subsequently used for ATP formation. In Cryptomeria japonica (Japanese cedar), this protein is Photosystem II reaction center protein Z.